The chain runs to 959 residues: MCEPDDNSARNGVTTQPSRSRELLMDVDDLDLDGSWPLDQIPYLSSSNRMISPIFVSSSSEQPCSPLWAFSDGGGNGFHHATSGGDDEKISSVSGVPSFRLAEYPLFLPYSSPSAAENTTEKHNSFQFPSPLMSLVPPENTDNYCVIKERMTQALRYFKESTEQHVLAQVWAPVRKNGRDLLTTLGQPFVLNPNGNGLNQYRMISLTYMFSVDSESDVELGLPGRVFRQKLPEWTPNVQYYSSKEFSRLDHALHYNVRGTLALPVFNPSGQSCIGVVELIMTSEKIHYAPEVDKVCKALEAVNLKSSEILDHQTTQICNESRQNALAEILEVLTVVCETHNLPLAQTWVPCQHGSVLANGGGLKKNCTSFDGSCMGQICMSTTDMACYVVDAHVWGFRDACLEHHLQKGQGVAGRAFLNGGSCFCRDITKFCKTQYPLVHYALMFKLTTCFAISLQSSYTGDDSYILEFFLPSSITDDQEQDLLLGSILVTMKEHFQSLRVASGVDFGEDDDKLSFEIIQALPDKKVHSKIESIRVPFSGFKSNATETMLIPQPVVQSSDPVNEKINVATVNGVVKEKKKTEKKRGKTEKTISLDVLQQYFTGSLKDAAKSLGVCPTTMKRICRQHGISRWPSRKIKKVNRSITKLKRVIESVQGTDGGLDLTSMAVSSIPWTHGQTSAQPLNSPNGSKPPELPNTNNSPNHWSSDHSPNEPNGSPELPPSNGHKRSRTVDESAGTPTSHGSCDGNQLDEPKVPNQDPLFTVGGSPGLLFPPYSRDHDVSAASFAMPNRLLGSIDHFRGMLIEDAGSSKDLRNLCPTAAFDDKFQDTNWMNNDNNSNNNLYAPPKEEAIANVACEPSGSEMRTVTIKASYKDDIIRFRISSGSGIMELKDEVAKRLKVDAGTFDIKYLDDDNEWVLIACDADLQECLEIPRSSRTKIVRLLVHDVTTNLGSSCESTGEL.

The tract at residues 1–22 (MCEPDDNSARNGVTTQPSRSRE) is disordered. Polar residues predominate over residues 9–18 (ARNGVTTQPS). Residues 578–659 (KKKTEKKRGK…IESVQGTDGG (82 aa)) enclose the RWP-RK domain. Residues 633–654 (SRKIKKVNRSITKLKRVIESVQ) are a coiled coil. Composition is skewed to polar residues over residues 673 to 687 (THGQ…SPNG), 694 to 703 (PNTNNSPNHW), and 735 to 745 (GTPTSHGSCDG). Residues 673–760 (THGQTSAQPL…PKVPNQDPLF (88 aa)) form a disordered region. The PB1 domain maps to 863-945 (TVTIKASYKD…KIVRLLVHDV (83 aa)).

Interacts with NRG2. Expressed in roots, stems, leaves, flowers and siliques. Detected in root hairs, emerging secondary roots, vascular tissues, leaf parenchyma cells and stomata.

It localises to the nucleus. Transcription factor involved in regulation of nitrate assimilation and in transduction of the nitrate signal. This Arabidopsis thaliana (Mouse-ear cress) protein is Protein NLP7 (NLP7).